Reading from the N-terminus, the 282-residue chain is Undecaprenyl-diphosphatase (282 aa).

6 consecutive transmembrane segments (helical) span residues 90–110 (YWLG…GLVC), 121–141 (LWVV…AEYV), 165–185 (LALI…LFLG), 194–214 (FGFL…IPDA), 228–248 (QLLV…SWLL), and 256–276 (LYWF…LLAV).

It belongs to the UppP family.

It is found in the cell membrane. The enzyme catalyses di-trans,octa-cis-undecaprenyl diphosphate + H2O = di-trans,octa-cis-undecaprenyl phosphate + phosphate + H(+). Catalyzes the dephosphorylation of undecaprenyl diphosphate (UPP). Confers resistance to bacitracin. The protein is Undecaprenyl-diphosphatase of Mycobacterium leprae (strain Br4923).